The sequence spans 712 residues: Polyribonucleotide nucleotidyltransferase (712 aa).

The Mg(2+) site is built by Asp-487 and Asp-493. The 60-residue stretch at 554 to 613 folds into the KH domain; that stretch reads PKIITMTINPDKIRDVIGPSGKQINKIIEETGVKIDIEQDGTVFISSINQEMNDKAKKII. An S1 motif domain is found at 623–691; that stretch reads GEIYEGKVKR…KQGRVNLSRK (69 aa).

This sequence belongs to the polyribonucleotide nucleotidyltransferase family. The cofactor is Mg(2+).

The protein localises to the cytoplasm. The catalysed reaction is RNA(n+1) + phosphate = RNA(n) + a ribonucleoside 5'-diphosphate. In terms of biological role, involved in mRNA degradation. Catalyzes the phosphorolysis of single-stranded polyribonucleotides processively in the 3'- to 5'-direction. This chain is Polyribonucleotide nucleotidyltransferase, found in Bacillus anthracis (strain CDC 684 / NRRL 3495).